Reading from the N-terminus, the 1053-residue chain is DIS3-like exonuclease 1 (1053 aa).

Residues 236-310 (AGIKSGRYIQ…KSEWKGRTAA (75 aa)) form the CSD1 domain. The disordered stretch occupies residues 306-332 (GRTAALGENDSDDKASGESPSEPMPTG). One can recognise a CSD2 domain in the interval 365 to 431 (ILVTPWDYRI…GEIATILVEN (67 aa)). The region spanning 465-816 (RKDLRTTHLV…VHRLLMAAIS (352 aa)) is the RNB domain. Ser989 bears the Phosphoserine mark.

Belongs to the RNR ribonuclease family. As to quaternary structure, component of the RNA exosome complex. The catalytically inactive RNA exosome core (Exo-9) complex is believed to associate with catalytic subunits EXOSC10, and DIS3 or DIS3L in cytoplasmic- and nuclear-specific RNA exosome complex forms. The cofactor is Mg(2+).

The protein resides in the cytoplasm. The catalysed reaction is Exonucleolytic cleavage in the 3'- to 5'-direction to yield nucleoside 5'-phosphates.. Functionally, catalytic component of the RNA exosome complex which has 3'-&gt;5' exoribonuclease activity and participates in a multitude of cellular RNA processing and degradation events. In the cytoplasm, the RNA exosome complex is involved in general mRNA turnover and specifically degrades inherently unstable mRNAs containing AU-rich elements (AREs) within their 3' untranslated regions, and in RNA surveillance pathways, preventing translation of aberrant mRNAs. It seems to be involved in degradation of histone mRNA. This Mus musculus (Mouse) protein is DIS3-like exonuclease 1 (Dis3l).